The following is a 381-amino-acid chain: Adenylate cyclase (381 aa).

The interval 1–30 is disordered; sequence MTVDDTGSGADGDGRVDPEPAPDSADPGED. One can recognise a Guanylate cyclase domain in the interval 191–300; that stretch reads AVGFADLVGF…TTVNLASRLT (110 aa). Aspartate 196 and aspartate 240 together coordinate Mg(2+).

Belongs to the adenylyl cyclase class-3 family. Mg(2+) is required as a cofactor.

It carries out the reaction ATP = 3',5'-cyclic AMP + diphosphate. This is Adenylate cyclase (cya) from Streptomyces coelicolor (strain ATCC BAA-471 / A3(2) / M145).